The primary structure comprises 443 residues: Structure-specific endonuclease subunit SLX1 (443 aa).

A GIY-YIG domain is found at 13-93 (RVYVCYCLRS…QKPHASRHLR (81 aa)). Positions 121-140 (FPATRSSAPSSAASHDSGLN) are disordered. An SLX1-type zinc finger spans residues 361-419 (CGLCGGHINRHVPLSYTHCPHACDAVFHLTCLARYSLEQETRAHARTFCLPTSAWCPMC).

Belongs to the SLX1 family. Forms a heterodimer with SLX4. A divalent metal cation serves as cofactor.

The protein localises to the nucleus. Functionally, catalytic subunit of the SLX1-SLX4 structure-specific endonuclease that resolves DNA secondary structures generated during DNA repair and recombination. Has endonuclease activity towards branched DNA substrates, introducing single-strand cuts in duplex DNA close to junctions with ss-DNA. The protein is Structure-specific endonuclease subunit SLX1 of Malassezia globosa (strain ATCC MYA-4612 / CBS 7966) (Dandruff-associated fungus).